The primary structure comprises 153 residues: D-aminoacyl-tRNA deacylase (153 aa).

Positions 142–143 match the Gly-cisPro motif, important for rejection of L-amino acids motif; sequence GP.

It belongs to the DTD family. As to quaternary structure, homodimer.

The protein resides in the cytoplasm. It catalyses the reaction glycyl-tRNA(Ala) + H2O = tRNA(Ala) + glycine + H(+). The enzyme catalyses a D-aminoacyl-tRNA + H2O = a tRNA + a D-alpha-amino acid + H(+). An aminoacyl-tRNA editing enzyme that deacylates mischarged D-aminoacyl-tRNAs. Also deacylates mischarged glycyl-tRNA(Ala), protecting cells against glycine mischarging by AlaRS. Acts via tRNA-based rather than protein-based catalysis; rejects L-amino acids rather than detecting D-amino acids in the active site. By recycling D-aminoacyl-tRNA to D-amino acids and free tRNA molecules, this enzyme counteracts the toxicity associated with the formation of D-aminoacyl-tRNA entities in vivo and helps enforce protein L-homochirality. The polypeptide is D-aminoacyl-tRNA deacylase (Cupriavidus taiwanensis (strain DSM 17343 / BCRC 17206 / CCUG 44338 / CIP 107171 / LMG 19424 / R1) (Ralstonia taiwanensis (strain LMG 19424))).